A 215-amino-acid chain; its full sequence is Redox-sensing transcriptional repressor Rex (215 aa).

The H-T-H motif DNA-binding region spans 18 to 57; that stretch reads LYYRFLKNLHASGKQRVSSAELSDAVKVDSATIRRDFSYF. 92-97 contributes to the NAD(+) binding site; that stretch reads GVGNLG.

This sequence belongs to the transcriptional regulatory Rex family. In terms of assembly, homodimer.

The protein localises to the cytoplasm. In terms of biological role, modulates transcription in response to changes in cellular NADH/NAD(+) redox state. This is Redox-sensing transcriptional repressor Rex from Bacillus licheniformis (strain ATCC 14580 / DSM 13 / JCM 2505 / CCUG 7422 / NBRC 12200 / NCIMB 9375 / NCTC 10341 / NRRL NRS-1264 / Gibson 46).